Here is a 426-residue protein sequence, read N- to C-terminus: Vacuole membrane protein hfl11 (426 aa).

A run of 5 helical transmembrane segments spans residues 39–59 (SVVR…LSVY), 73–93 (IYEA…LGGE), 133–153 (GILQ…LTKV), 172–192 (IGLV…TFWV), and 223–243 (VLSI…YSLL). S364 bears the Phosphoserine mark. Residues 386–409 (LQFEIDDEMEPLYNQAKQMRYGDY) are ATG8-interacting region.

The protein belongs to the TMEM184 family. In terms of assembly, interacts with atg8.

It is found in the vacuole membrane. Functionally, vacuole membrane protein that recruits ATG8 to facilitate the degradation of vacuolar integral membrane proteins during early-stationary vacuole turnover (EVT) when cells enter stationary phase. In Schizosaccharomyces pombe (strain 972 / ATCC 24843) (Fission yeast), this protein is Vacuole membrane protein hfl11.